The following is a 374-amino-acid chain: Histidinol-phosphate aminotransferase 1 (374 aa).

K232 carries the N6-(pyridoxal phosphate)lysine modification.

It belongs to the class-II pyridoxal-phosphate-dependent aminotransferase family. Histidinol-phosphate aminotransferase subfamily. Homodimer. Pyridoxal 5'-phosphate is required as a cofactor.

The enzyme catalyses L-histidinol phosphate + 2-oxoglutarate = 3-(imidazol-4-yl)-2-oxopropyl phosphate + L-glutamate. Its pathway is amino-acid biosynthesis; L-histidine biosynthesis; L-histidine from 5-phospho-alpha-D-ribose 1-diphosphate: step 7/9. The polypeptide is Histidinol-phosphate aminotransferase 1 (hisC1) (Ralstonia nicotianae (strain ATCC BAA-1114 / GMI1000) (Ralstonia solanacearum)).